Reading from the N-terminus, the 216-residue chain is Adenylate kinase (216 aa).

An ATP-binding site is contributed by glycine 10–threonine 15. Positions serine 30–valine 59 are NMP. AMP contacts are provided by residues threonine 31, arginine 36, alanine 57–valine 59, glycine 85–arginine 88, and glutamine 92. Positions glycine 126–aspartate 163 are LID. Arginine 127 provides a ligand contact to ATP. Positions 130, 133, 150, and 153 each coordinate Zn(2+). AMP is bound by residues arginine 160 and arginine 171. Lysine 199 contacts ATP.

Belongs to the adenylate kinase family. As to quaternary structure, monomer.

The protein localises to the cytoplasm. The enzyme catalyses AMP + ATP = 2 ADP. It participates in purine metabolism; AMP biosynthesis via salvage pathway; AMP from ADP: step 1/1. Catalyzes the reversible transfer of the terminal phosphate group between ATP and AMP. Plays an important role in cellular energy homeostasis and in adenine nucleotide metabolism. This chain is Adenylate kinase, found in Syntrophotalea carbinolica (strain DSM 2380 / NBRC 103641 / GraBd1) (Pelobacter carbinolicus).